Consider the following 141-residue polypeptide: MSAVVYFSSASRNTERFVEHCDFPSCGVNVFRIPLQPNAAPLNVREPYIIIVPTYGGGDARKAVPPQVKRFLNDPANREWIRGVIASGNTNFGEAYAAAGPIISRKCHVPLMYRFELMGTREDVHAVREGVRRFFSDTPTD.

Belongs to the NrdI family.

Probably involved in ribonucleotide reductase function. This chain is Protein NrdI, found in Bifidobacterium animalis subsp. lactis (strain AD011).